Here is a 252-residue protein sequence, read N- to C-terminus: Eukaryotic translation initiation factor 3 subunit J (252 aa).

Disordered stretches follow at residues 24-107 and 209-232; these read VPAG…TPEE and KQSK…TMKD. Acidic residues predominate over residues 36–56; it reads EDEEDDVKDNWDDEEEEEEVK. Positions 57–107 are enriched in basic and acidic residues; it reads EAEVKQEPKVSEKKKIAEKIKEKEKQQKKKQEELKKRLEAPEEHKELTPEE. Residues 65–130 are a coiled coil; it reads KVSEKKKIAE…ESDLELAKET (66 aa).

It belongs to the eIF-3 subunit J family. As to quaternary structure, component of the eukaryotic translation initiation factor 3 (eIF-3) complex, which is composed of 13 subunits: EIF3A, EIF3B, EIF3C, EIF3D, EIF3E, EIF3F, EIF3G, EIF3H, EIF3I, EIF3J, EIF3K, EIF3L and EIF3M.

The protein resides in the cytoplasm. Component of the eukaryotic translation initiation factor 3 (eIF-3) complex, which is involved in protein synthesis of a specialized repertoire of mRNAs and, together with other initiation factors, stimulates binding of mRNA and methionyl-tRNAi to the 40S ribosome. The eIF-3 complex specifically targets and initiates translation of a subset of mRNAs involved in cell proliferation. This is Eukaryotic translation initiation factor 3 subunit J from Gallus gallus (Chicken).